We begin with the raw amino-acid sequence, 89 residues long: MAKESMKAREVKRQKLVKKYAEKRAALKEAGDYEGLQKLPKNSSPVRLHNRCKLTGRPKGYMRQFGLSRVMFREMANQGLIPGVKKASW.

The interval 32-51 (DYEGLQKLPKNSSPVRLHNR) is disordered.

The protein belongs to the universal ribosomal protein uS14 family. As to quaternary structure, part of the 30S ribosomal subunit. Contacts proteins S3 and S10.

Functionally, binds 16S rRNA, required for the assembly of 30S particles and may also be responsible for determining the conformation of the 16S rRNA at the A site. In Christiangramia forsetii (strain DSM 17595 / CGMCC 1.15422 / KT0803) (Gramella forsetii), this protein is Small ribosomal subunit protein uS14.